A 68-amino-acid chain; its full sequence is Metallothionein-3 (68 aa).

The residue at position 1 (M1) is an N-acetylmethionine. The beta stretch occupies residues 1–30 (MDPETCPCPTGGSCTCSDPCKCEGCTCASS). A divalent metal cation is bound by residues C6, C8, C14, C16, C20, C22, C25, and C27. Positions 31 to 68 (KKSCCSCCPAECEKCAKDCVCKGGEGAEAEEKKCSCCQ) are alpha. A Phosphoserine modification is found at S33. Positions 34, 35, 37, 38, 42, 45, 49, 51, 64, 66, and 67 each coordinate a divalent metal cation.

This sequence belongs to the metallothionein superfamily. Type 1 family.

Its function is as follows. Binds heavy metals. Contains five zinc and one copper atoms per polypeptide chain and only a negligible amount of cadmium. This chain is Metallothionein-3 (MT3), found in Bos mutus grunniens (Wild yak).